A 1607-amino-acid chain; its full sequence is Laminin subunit gamma-1 (1607 aa).

A signal peptide spans 1–33 (MTGGGRAALALQPRGRLWPLLAVLAAVAGCVRA). The Laminin N-terminal domain occupies 44-283 (RPQRCMPEFV…AISDFAVGGR (240 aa)). 2 N-linked (GlcNAc...) asparagine glycosylation sites follow: N58 and N132. 15 disulfide bridges follow: C284-C293, C286-C303, C305-C314, C340-C349, C342-C365, C368-C377, C380-C393, C396-C408, C398-C414, C416-C425, C428-C440, C443-C454, C445-C461, C463-C472, and C475-C490. 4 consecutive Laminin EGF-like domains span residues 284–339 (CKCN…ESLP), 340–395 (CDCN…ACSP), 396–442 (CHCS…GCRP), and 443–492 (CSCD…GCTP). One can recognise a Laminin EGF-like 5; first part domain in the interval 493 to 502 (CFCFGHSSVC). Residues 512–687 (DISSTFQIDE…PGVPATWVES (176 aa)) enclose the Laminin IV type A domain. N-linked (GlcNAc...) asparagine glycans are attached at residues N574 and N648. One can recognise a Laminin EGF-like 5; second part domain in the interval 688–721 (CTCPVGYGGQFCETCLPGYRRETPSLGPYSPCVL). Disulfide bonds link C722–C731, C724–C738, C740–C749, C752–C768, C771–C779, C773–C790, C793–C802, C805–C823, C826–C840, C828–C847, C850–C859, C862–C879, C882–C896, C884–C903, C905–C914, C917–C930, C933–C945, C935–C952, C954–C963, C966–C978, C981–C993, C983–C999, C1001–C1010, and C1013–C1026. 2 consecutive Laminin EGF-like domains span residues 722–770 (CTCN…DCQP) and 771–825 (CPCP…LCRP). The region spanning 826-881 (CQCNDNIDPNAVGNCNRLTGECLKCIYNTAGFYCDRCKEGFFGNPLAPNPADKCKA) is the Laminin EGF-like 8; nidogen-binding domain. 3 Laminin EGF-like domains span residues 882-932 (CACN…GCER), 933-980 (CDCH…GCKP), and 981-1028 (CDCH…GCQE). N-linked (GlcNAc...) asparagine glycosylation is found at N1020 and N1105. Residues 1029–1607 (CPACYRLVKD…CFNTPSIEKP (579 aa)) are domain II and I. Residues 1034–1594 (RLVKDKAAEH…HNLEDIKKTL (561 aa)) adopt a coiled-coil conformation. Phosphoserine is present on S1147. N-linked (GlcNAc...) asparagine glycans are attached at residues N1159, N1173, N1203, N1221, N1239, N1378, N1393, and N1437. S1491 carries the post-translational modification Phosphoserine.

In terms of assembly, laminin is a complex glycoprotein, consisting of three different polypeptide chains (alpha, beta, gamma), which are bound to each other by disulfide bonds into a cross-shaped molecule comprising one long and three short arms with globules at each end. Gamma-1 is a subunit of laminin-1 (laminin-111 or EHS laminin), laminin-2 (laminin-211 or merosin), laminin-3 (laminin-121 or S-laminin), laminin-4 (laminin-221 or S-merosin), laminin-6 (laminin-311 or K-laminin), laminin-7 (laminin-321 or KS-laminin), laminin-8 (laminin-411), laminin-9 (laminin-421), laminin-10 (laminin-511) and laminin-11 (laminin-521). Interacts with SVEP1. In terms of tissue distribution, found in the basement membranes (major component).

Its subcellular location is the secreted. The protein resides in the extracellular space. The protein localises to the extracellular matrix. It is found in the basement membrane. Its function is as follows. Binding to cells via a high affinity receptor, laminin is thought to mediate the attachment, migration and organization of cells into tissues during embryonic development by interacting with other extracellular matrix components. The protein is Laminin subunit gamma-1 (Lamc1) of Mus musculus (Mouse).